Reading from the N-terminus, the 579-residue chain is SLAIN motif-containing protein 1 (579 aa).

6 disordered regions span residues 1–21 (MMAE…GPGP), 60–95 (LLLQ…GPGA), 135–162 (GGGG…PPTL), 233–258 (YTSR…LEDD), 289–313 (STSA…TCSD), and 347–454 (IPHS…PGQI). Low complexity predominate over residues 9 to 21 (ASPVAASGAGPGP). Residues 21–56 (PVVNAELEVKKLQELVRKLEKQNEQLRSRAASAAAA) adopt a coiled-coil conformation. The segment covering 63 to 73 (QPPPPSAPPPA) has biased composition (pro residues). A compositionally biased stretch (low complexity) spans 141-154 (EPGTAGTPPGEAAT). A compositionally biased stretch (polar residues) spans 233–243 (YTSRGSPLSPQ). S241 bears the Phosphoserine mark. Low complexity-rich tracts occupy residues 244–253 (SSIDSELSTS) and 289–305 (STSA…SLSS). Positions 362 to 373 (SPSTQYFPSNNF) are enriched in polar residues. A compositionally biased stretch (low complexity) spans 374-390 (QQPQYYPPQAQTADQQP). The segment covering 412-432 (AAASSNLSSPVTVRSSQSFDS) has biased composition (polar residues). R469 bears the Asymmetric dimethylarginine mark. A disordered region spans residues 479 to 516 (SPTVQGSSSSGSSGSSGGSGSGMPLSNGTQLYSTTGIP). The segment covering 502–516 (PLSNGTQLYSTTGIP) has biased composition (polar residues). Position 554 is an asymmetric dimethylarginine (R554).

This sequence belongs to the SLAIN motif-containing family. Interacts with MAPRE1, MAPRE2, MAPRE3 and CKAP5. Interacts with ZDHHC17 (via ANK repeats). Expressed in embryonic stem cells. Expressed in adult bone marrow, brain, kidney, lung, testis and thymus. Expressed in colon. Isoform 1 is highly expressed in brain. Isoform 2 is more widely expressed in bone marrow, brain, colon, kidney, lung and thymus.

It is found in the cytoplasm. Its subcellular location is the cytoskeleton. Microtubule plus-end tracking protein that might be involved in the regulation of cytoplasmic microtubule dynamics, microtubule organization and microtubule elongation. The polypeptide is SLAIN motif-containing protein 1 (Slain1) (Mus musculus (Mouse)).